A 394-amino-acid polypeptide reads, in one-letter code: Phosphoglycerate kinase (394 aa).

Residues 21–23 (DFN), Arg36, 59–62 (HLGR), Arg118, and Arg151 contribute to the substrate site. Residue Ser183 is modified to Phosphoserine. Positions 201 and 292 each coordinate ATP. A Phosphothreonine modification is found at Thr299. ATP-binding positions include Glu323 and 350 to 353 (GGDS).

Belongs to the phosphoglycerate kinase family. As to quaternary structure, monomer.

The protein resides in the cytoplasm. It carries out the reaction (2R)-3-phosphoglycerate + ATP = (2R)-3-phospho-glyceroyl phosphate + ADP. It participates in carbohydrate degradation; glycolysis; pyruvate from D-glyceraldehyde 3-phosphate: step 2/5. This is Phosphoglycerate kinase from Bacillus cereus (strain B4264).